A 399-amino-acid chain; its full sequence is Nuclear hormone receptor family member nhr-125 (399 aa).

The segment at residues 10–80 (PFSCRICNQK…MGMDTTKFQY (71 aa)) is a DNA-binding region (nuclear receptor). 2 NR C4-type zinc fingers span residues 13–33 (CRIC…CRAC) and 50–63 (CQKG…CKRC). Positions 149–392 (QLENLTEGFK…EKLQKSQFSI (244 aa)) constitute an NR LBD domain.

The protein belongs to the nuclear hormone receptor family.

Its subcellular location is the nucleus. Its function is as follows. Orphan nuclear receptor. This Caenorhabditis elegans protein is Nuclear hormone receptor family member nhr-125 (nhr-125).